Reading from the N-terminus, the 593-residue chain is Proline--tRNA ligase (593 aa).

It belongs to the class-II aminoacyl-tRNA synthetase family. ProS type 1 subfamily. Homodimer.

The protein resides in the cytoplasm. It carries out the reaction tRNA(Pro) + L-proline + ATP = L-prolyl-tRNA(Pro) + AMP + diphosphate. Catalyzes the attachment of proline to tRNA(Pro) in a two-step reaction: proline is first activated by ATP to form Pro-AMP and then transferred to the acceptor end of tRNA(Pro). As ProRS can inadvertently accommodate and process non-cognate amino acids such as alanine and cysteine, to avoid such errors it has two additional distinct editing activities against alanine. One activity is designated as 'pretransfer' editing and involves the tRNA(Pro)-independent hydrolysis of activated Ala-AMP. The other activity is designated 'posttransfer' editing and involves deacylation of mischarged Ala-tRNA(Pro). The misacylated Cys-tRNA(Pro) is not edited by ProRS. The chain is Proline--tRNA ligase from Synechococcus sp. (strain CC9605).